The primary structure comprises 878 residues: Alanine--tRNA ligase (878 aa).

Residues H562, H566, C670, and H674 each contribute to the Zn(2+) site.

This sequence belongs to the class-II aminoacyl-tRNA synthetase family. Requires Zn(2+) as cofactor.

It localises to the cytoplasm. It catalyses the reaction tRNA(Ala) + L-alanine + ATP = L-alanyl-tRNA(Ala) + AMP + diphosphate. Functionally, catalyzes the attachment of alanine to tRNA(Ala) in a two-step reaction: alanine is first activated by ATP to form Ala-AMP and then transferred to the acceptor end of tRNA(Ala). Also edits incorrectly charged Ser-tRNA(Ala) and Gly-tRNA(Ala) via its editing domain. This is Alanine--tRNA ligase from Acinetobacter baumannii (strain ACICU).